The primary structure comprises 267 residues: 4,5-DOPA dioxygenase extradiol (267 aa).

Residues H9, H47, H168, and H222 each coordinate Zn(2+).

Belongs to the DODA-type extradiol aromatic ring-opening dioxygenase family. Zn(2+) is required as a cofactor. Fe(2+) serves as cofactor. In terms of tissue distribution, expressed in petals. Not detected in leaves, stems and roots.

It is found in the cytoplasm. The enzyme catalyses L-dopa + O2 = 4-(L-alanin-3-yl)-2-hydroxy-cis,cis-muconate 6-semialdehyde + H(+). It participates in pigment biosynthesis; betalain biosynthesis. In terms of biological role, opens the cyclic ring of dihydroxy-phenylalanine (DOPA) between carbons 4 and 5, thus producing an unstable seco-DOPA that rearranges nonenzymatically to betalamic acid. Produces mainly (S)-betalamic acid. Required for the coloration of flowers. This chain is 4,5-DOPA dioxygenase extradiol (DOD), found in Mirabilis jalapa (Garden four-o'clock).